A 422-amino-acid polypeptide reads, in one-letter code: O-methyltransferase kk1A (422 aa).

Asp-277 serves as a coordination point for S-adenosyl-L-methionine. His-320 functions as the Proton acceptor in the catalytic mechanism.

It belongs to the class I-like SAM-binding methyltransferase superfamily. Cation-independent O-methyltransferase family.

Its pathway is secondary metabolite biosynthesis. O-methyltransferase; part of the gene cluster that mediates the biosynthesis of KK-1, a novel cyclic depsipeptide with 10 residues which is a promising active compound with high activity against many plant pathogens, especially Botrytis cinerea. Within the pathway, kk1A is responsible for the O-methylation of tyrosine as a free amino acid before its activation as an aminoacyl-AMP by the corresponding A domain of kk1B. The nonribosomal peptide synthetase (NRPS) kk1B catalyzes the elongation and cyclization of the decapeptide chain composed of 1 D-lactic acid residue (D-Lac), 1 pipecolic acid residue (Pip), 1 aspartic acid residue (Asp), 1 isoleucine residue (Ile), 1 glycine residue (Gly), 1 tyrosine residue (Tyr) and 4 valine residues (Val). The Asp, Ile and 3 Val residues are N-methylated by the 5 methyltransferase domains from the NRPS (found in modules 3, 5, 6, 7 and 9), whereas the Tyr residue is O-methylated by the cluster encoded O-methyltransferase kk1A. The thioesterase kk1J is likely to be involved in the corrective mechanism of peptide chain synthesis. The D-lactate dehydrogenase kk1H is involved in the synthesis of D-lactic acid from pyruvic acid, which is recognized by the A domain of the first kk1B module. The pyrroline-5-carboxylate reductase kk1I is involved in the synthesis of the L-pipecolic acid residue of KK-1 from delta-1-pyrroline-5-carboxylate (P5C), a metabolic intermediate of lysine. It is still unclear how kk1C and kk1D are involved in the production of KK-1. This Curvularia clavata protein is O-methyltransferase kk1A.